The following is a 317-amino-acid chain: Heme-binding protein HMX1 (317 aa).

Residues 1–289 lie on the Cytoplasmic side of the membrane; sequence MEDSSNTIIP…FNKDSATRRA (289 aa). The helical; Anchor for type IV membrane protein transmembrane segment at 290–310 threads the bilayer; that stretch reads LHTVMLLVLSIIAIWVLYFLV.

It depends on heme as a cofactor.

The protein resides in the endoplasmic reticulum membrane. Plays an important role in the degradation of heme under conditions of iron deprivation. The sequence is that of Heme-binding protein HMX1 (HMX1) from Saccharomyces cerevisiae (strain ATCC 204508 / S288c) (Baker's yeast).